The sequence spans 455 residues: UDP-N-acetylmuramoylalanine--D-glutamate ligase (455 aa).

117–123 (GSAGKTT) is an ATP binding site.

The protein belongs to the MurCDEF family.

It is found in the cytoplasm. The catalysed reaction is UDP-N-acetyl-alpha-D-muramoyl-L-alanine + D-glutamate + ATP = UDP-N-acetyl-alpha-D-muramoyl-L-alanyl-D-glutamate + ADP + phosphate + H(+). The protein operates within cell wall biogenesis; peptidoglycan biosynthesis. In terms of biological role, cell wall formation. Catalyzes the addition of glutamate to the nucleotide precursor UDP-N-acetylmuramoyl-L-alanine (UMA). This Symbiobacterium thermophilum (strain DSM 24528 / JCM 14929 / IAM 14863 / T) protein is UDP-N-acetylmuramoylalanine--D-glutamate ligase.